The primary structure comprises 295 residues: uncharacterized protein (295 aa).

The first 19 residues, 1–19 (MHKLLLIITVFFTFNVAQA), serve as a signal peptide directing secretion.

This is an uncharacterized protein from Rickettsia prowazekii (strain Madrid E).